Reading from the N-terminus, the 470-residue chain is Chitin deacetylase 1 (470 aa).

The signal sequence occupies residues 1-19; the sequence is MFTFAAFSALLISLAGVVA. 2 N-linked (GlcNAc...) asparagine glycosylation sites follow: N101 and N121. A disulfide bridge connects residues C155 and C363. The NodB homology domain occupies 159–358; sequence NVWGLSYDDG…VLANGTYQLK (200 aa). D166 acts as the Proton acceptor in catalysis. Acetate is bound at residue D166. Co(2+) contacts are provided by D167, H216, and H220. Y257 is a binding site for acetate. H331 serves as the catalytic Proton donor. N-linked (GlcNAc...) asparagine glycosylation is found at N352, N378, and N440. Residues 406-447 form a disordered region; that stretch reads EVSAPSEATGSTAAGSAASTTSGSGASASTGAASNTSSSGSG. Over residues 408–447 the composition is skewed to low complexity; it reads SAPSEATGSTAAGSAASTTSGSGASASTGAASNTSSSGSG. S444 carries the GPI-anchor amidated serine lipid modification. The propeptide at 445–470 is removed in mature form; that stretch reads GSGRSATMGGALIALAAVAVGMVYVA.

This sequence belongs to the polysaccharide deacetylase family. Co(2+) serves as cofactor.

It is found in the secreted. The protein localises to the cell wall. Its subcellular location is the cell membrane. It catalyses the reaction [(1-&gt;4)-N-acetyl-beta-D-glucosaminyl](n) + n H2O = chitosan + n acetate. In terms of biological role, hydrolyzes the N-acetamido groups of N-acetyl-D-glucosamine residues in chitin to form chitosan and acetate. Chitosan is required to anchor melanin to the cell wall, for maintenance of cell wall integrity, and for proper cytokinesis. Plays a major role in synthesizing cell wall chitosan during host infection; chitosan offers an advantage during infection as it is less readily detected than chitin by host immunosurveillance mechanisms. The protein is Chitin deacetylase 1 of Cryptococcus neoformans var. grubii serotype A (strain H99 / ATCC 208821 / CBS 10515 / FGSC 9487) (Filobasidiella neoformans var. grubii).